Here is an 865-residue protein sequence, read N- to C-terminus: Protein translocase subunit SecA (865 aa).

ATP-binding positions include Gln85, 103 to 107 (GEGKT), and Asp505. Residues Cys847, Cys849, Cys858, and His859 each contribute to the Zn(2+) site.

Belongs to the SecA family. Monomer and homodimer. Part of the essential Sec protein translocation apparatus which comprises SecA, SecYEG and auxiliary proteins SecDF. Other proteins may also be involved. Requires Zn(2+) as cofactor.

Its subcellular location is the cell membrane. The protein localises to the cytoplasm. It catalyses the reaction ATP + H2O + cellular proteinSide 1 = ADP + phosphate + cellular proteinSide 2.. In terms of biological role, part of the Sec protein translocase complex. Interacts with the SecYEG preprotein conducting channel. Has a central role in coupling the hydrolysis of ATP to the transfer of proteins into and across the cell membrane, serving as an ATP-driven molecular motor driving the stepwise translocation of polypeptide chains across the membrane. This chain is Protein translocase subunit SecA, found in Lactococcus lactis subsp. lactis (strain IL1403) (Streptococcus lactis).